A 737-amino-acid chain; its full sequence is O-GlcNAcase BT_4395 (737 aa).

An N-terminal signal peptide occupies residues 1–21 (MKNNKIYLLGACLLCAVTTFA). A catalytic domain region spans residues 148–433 (VRYRGVVEGF…WKDAIRTILP (286 aa)). Residues 149–416 (RYRGVVEGFY…SVASYAWNPA (268 aa)) form the GH84 domain. Gly156, Lys187, and Asp263 together coordinate a protein. Asp264 serves as the catalytic Proton donor. A protein-binding positions include Tyr303, 358-360 (WWN), Asp365, and Asn393.

This sequence belongs to the glycosyl hydrolase 84 family. As to quaternary structure, homodimer.

It catalyses the reaction 3-O-(N-acetyl-beta-D-glucosaminyl)-L-seryl-[protein] + H2O = N-acetyl-D-glucosamine + L-seryl-[protein]. It carries out the reaction 3-O-(N-acetyl-beta-D-glucosaminyl)-L-threonyl-[protein] + H2O = L-threonyl-[protein] + N-acetyl-D-glucosamine. Inhibited by 1,2-dideoxy-2'-methyl-alpha-D-glucopyranoso-[2,1-d]-delta 2'-thiazoline (NAG-thiazoline) and O-(2-acetamido-2-deoxy-D-glucopyranosylidene)amino-N-phenyl-carbamate (PUGNAc). Not inhibited by Streptozotocin. Can hydrolyze the glycosidic link of O-GlcNAcylated proteins. Can use p-nitrophenyl-beta-GlcNAc and 4-methylumbelliferone-GlcNAc as substrates (in vitro). The polypeptide is O-GlcNAcase BT_4395 (Bacteroides thetaiotaomicron (strain ATCC 29148 / DSM 2079 / JCM 5827 / CCUG 10774 / NCTC 10582 / VPI-5482 / E50)).